The sequence spans 901 residues: Aconitate hydratase A (901 aa).

Positions 443, 509, and 512 each coordinate [4Fe-4S] cluster.

The protein belongs to the aconitase/IPM isomerase family. Monomer. The cofactor is [4Fe-4S] cluster.

The catalysed reaction is citrate = D-threo-isocitrate. It carries out the reaction (2S,3R)-3-hydroxybutane-1,2,3-tricarboxylate = 2-methyl-cis-aconitate + H2O. It functions in the pathway carbohydrate metabolism; tricarboxylic acid cycle; isocitrate from oxaloacetate: step 2/2. The protein operates within organic acid metabolism; propanoate degradation. Functionally, involved in the catabolism of short chain fatty acids (SCFA) via the tricarboxylic acid (TCA)(acetyl degradation route) and probably the 2-methylcitrate cycle I (propionate degradation route). Catalyzes the reversible isomerization of citrate to isocitrate via cis-aconitate. Could catalyze the hydration of 2-methyl-cis-aconitate to yield (2R,3S)-2-methylisocitrate. The apo form of AcnA functions as a RNA-binding regulatory protein. The sequence is that of Aconitate hydratase A (acnA) from Staphylococcus aureus (strain COL).